The following is an 87-amino-acid chain: Conotoxin Bt15a (87 aa).

The first 23 residues, 1–23 (MEKLTILVLVATVLLAIQVLVQS), serve as a signal peptide directing secretion. Positions 24 to 49 (DGEKPLKRRVKQYAAKRLSALMRGPR) are excised as a propeptide. Q50 bears the Pyrrolidone carboxylic acid mark.

The protein belongs to the conotoxin O2 superfamily. In terms of processing, contains 4 disulfide bonds. In terms of tissue distribution, expressed by the venom duct.

The protein localises to the secreted. This Conus betulinus (Beech cone) protein is Conotoxin Bt15a.